We begin with the raw amino-acid sequence, 429 residues long: 3-phosphoshikimate 1-carboxyvinyltransferase (429 aa).

Positions 11, 12, and 16 each coordinate 3-phosphoshikimate. Lys-11 lines the phosphoenolpyruvate pocket. 2 residues coordinate phosphoenolpyruvate: Gly-82 and Arg-110. Residues Ser-155, Gln-157, Asp-302, and Lys-329 each contribute to the 3-phosphoshikimate site. Gln-157 contributes to the phosphoenolpyruvate binding site. Asp-302 (proton acceptor) is an active-site residue. Phosphoenolpyruvate contacts are provided by Arg-333 and Arg-385.

This sequence belongs to the EPSP synthase family. Monomer.

It localises to the cytoplasm. It carries out the reaction 3-phosphoshikimate + phosphoenolpyruvate = 5-O-(1-carboxyvinyl)-3-phosphoshikimate + phosphate. It functions in the pathway metabolic intermediate biosynthesis; chorismate biosynthesis; chorismate from D-erythrose 4-phosphate and phosphoenolpyruvate: step 6/7. Catalyzes the transfer of the enolpyruvyl moiety of phosphoenolpyruvate (PEP) to the 5-hydroxyl of shikimate-3-phosphate (S3P) to produce enolpyruvyl shikimate-3-phosphate and inorganic phosphate. The protein is 3-phosphoshikimate 1-carboxyvinyltransferase of Helicobacter acinonychis (strain Sheeba).